The sequence spans 694 residues: Putative bifunctional polynucleotide kinase/RNA ligase (694 aa).

The interval 1-385 is ligase domain; that stretch reads MLHVSRLLAN…TKQALNNKLA (385 aa). Positions 394-694 are bifunctional 5'-OH polynucleotide kinase/polynucleotide 3'-phosphatase; that stretch reads KQLLVLIGIS…FNVCRDYLEF (301 aa). Residue 401–408 participates in ATP binding; the sequence is GISGSGKS.

The enzyme catalyses a 5'-end dephospho-2'-deoxyribonucleoside-DNA + ATP = a 5'-end 5'-phospho-2'-deoxyribonucleoside-DNA + ADP + H(+). The catalysed reaction is ATP + (ribonucleotide)n-3'-hydroxyl + 5'-phospho-(ribonucleotide)m = (ribonucleotide)n+m + AMP + diphosphate.. Its function is as follows. Trifunctional enzyme that possesses a bifunctional polynucleotide kinase/phosphatase activity and an ATP-dependent RNA ligase activity. May therefore play a role to evade an RNA damage-based host response. This Autographa californica nuclear polyhedrosis virus (AcMNPV) protein is Putative bifunctional polynucleotide kinase/RNA ligase (PNK/PNL).